The following is a 415-amino-acid chain: Thyroxine-binding globulin (415 aa).

A signal peptide spans 1 to 20 (MSPFLYLVLLVLGLHATIHC). 4 N-linked (GlcNAc...) asparagine glycosylation sites follow: Asn36, Asn99, Asn165, and Asn253. Thyroxine-binding residues include Asn293 and Arg398.

Belongs to the serpin family.

Its subcellular location is the secreted. Its function is as follows. Major thyroid hormone transport protein in serum. This chain is Thyroxine-binding globulin (SERPINA7), found in Pan troglodytes (Chimpanzee).